We begin with the raw amino-acid sequence, 379 residues long: 1-deoxy-D-xylulose 5-phosphate reductoisomerase (379 aa).

Positions 10, 11, 12, 13, 36, 38, and 121 each coordinate NADPH. Position 122 (lysine 122) interacts with 1-deoxy-D-xylulose 5-phosphate. An NADPH-binding site is contributed by glutamate 123. Aspartate 147 is a binding site for Mn(2+). Serine 148, glutamate 149, serine 173, and histidine 196 together coordinate 1-deoxy-D-xylulose 5-phosphate. Glutamate 149 is a binding site for Mn(2+). Glycine 202 lines the NADPH pocket. The 1-deoxy-D-xylulose 5-phosphate site is built by serine 209, asparagine 214, lysine 215, and glutamate 218. Glutamate 218 provides a ligand contact to Mn(2+).

The protein belongs to the DXR family. Mg(2+) is required as a cofactor. The cofactor is Mn(2+).

It carries out the reaction 2-C-methyl-D-erythritol 4-phosphate + NADP(+) = 1-deoxy-D-xylulose 5-phosphate + NADPH + H(+). It participates in isoprenoid biosynthesis; isopentenyl diphosphate biosynthesis via DXP pathway; isopentenyl diphosphate from 1-deoxy-D-xylulose 5-phosphate: step 1/6. Its function is as follows. Catalyzes the NADPH-dependent rearrangement and reduction of 1-deoxy-D-xylulose-5-phosphate (DXP) to 2-C-methyl-D-erythritol 4-phosphate (MEP). This chain is 1-deoxy-D-xylulose 5-phosphate reductoisomerase, found in Shouchella clausii (strain KSM-K16) (Alkalihalobacillus clausii).